The primary structure comprises 339 residues: Erlin-2 (339 aa).

Topologically, residues 1-3 (MAQ) are cytoplasmic. A helical membrane pass occupies residues 4–24 (LGAVVAVASSFFCASLFSAVH). Over 25–339 (KIEEGHIGVY…EPLETATKDN (315 aa)) the chain is Extracellular. A glycan (N-linked (GlcNAc...) asparagine) is linked at Asn-106. The tract at residues 177-309 (EAIRRNYELM…DIPNMFMDSA (133 aa)) is interaction with ERLIN1. The residue at position 267 (Lys-267) is an N6-acetyllysine.

The protein belongs to the band 7/mec-2 family. In terms of assembly, forms a heteromeric complex with ERLIN1. In complex with ERLIN1, interacts with RNF170. Interacts with activated ITPR1, independently of the degree of ITPR1 polyubiquitination. Interacts with SCAP, INSIG1, SREBF1 and SREBF2 under cholesterol sufficiency conditions; indicative for an association with the SCAP-SREBP-INSIG complex. Probably part of an AMFR/gp78 and INSIG1-containing ubiquitin ligase complex involved in ERAD of HMGCR. Interacts with TMUB1; TMUB1 bridges the association with AMFR. Interacts with SYVN1 and RNF139. Interacts with TMEM259. Interacts with TMEM41B. Deubiquitinated by USP25; leading to stabilization.

It localises to the endoplasmic reticulum membrane. Component of the ERLIN1/ERLIN2 complex which mediates the endoplasmic reticulum-associated degradation (ERAD) of inositol 1,4,5-trisphosphate receptors (IP3Rs) such as ITPR1. Promotes sterol-accelerated ERAD of HMGCR probably implicating an AMFR/gp78-containing ubiquitin ligase complex. Involved in regulation of cellular cholesterol homeostasis by regulation the SREBP signaling pathway. May promote ER retention of the SCAP-SREBF complex. The chain is Erlin-2 from Rattus norvegicus (Rat).